The sequence spans 122 residues: Large ribosomal subunit protein uL14 (122 aa).

Belongs to the universal ribosomal protein uL14 family. Part of the 50S ribosomal subunit. Forms a cluster with proteins L3 and L19. In the 70S ribosome, L14 and L19 interact and together make contacts with the 16S rRNA in bridges B5 and B8.

Its function is as follows. Binds to 23S rRNA. Forms part of two intersubunit bridges in the 70S ribosome. This chain is Large ribosomal subunit protein uL14, found in Thermus aquaticus.